Here is a 551-residue protein sequence, read N- to C-terminus: Ubiquitin carboxyl-terminal hydrolase 24 (551 aa).

Disordered regions lie at residues 51–104 (NSSV…SLRV) and 163–188 (NEDFSSDSSSGSIQRKKNLKVPTESV). In terms of domain architecture, USP spans 197-551 (RGLINAGNLC…QAYVLFYKQV (355 aa)). Cys-206 acts as the Nucleophile in catalysis. The span at 329 to 338 (SKSSVISSAN) shows a compositional bias: polar residues. The segment at 329 to 349 (SKSSVISSANDDGDEWETVGP) is disordered. His-510 serves as the catalytic Proton acceptor.

Belongs to the peptidase C19 family.

It carries out the reaction Thiol-dependent hydrolysis of ester, thioester, amide, peptide and isopeptide bonds formed by the C-terminal Gly of ubiquitin (a 76-residue protein attached to proteins as an intracellular targeting signal).. Recognizes and hydrolyzes the peptide bond at the C-terminal Gly of ubiquitin. Involved in the processing of poly-ubiquitin precursors as well as that of ubiquitinated proteins. This Arabidopsis thaliana (Mouse-ear cress) protein is Ubiquitin carboxyl-terminal hydrolase 24 (UBP24).